Here is an 857-residue protein sequence, read N- to C-terminus: uncharacterized protein (857 aa).

Disordered regions lie at residues 316–339 (PPAP…TKEN), 484–561 (AKQP…PRTN), 619–777 (GQFP…PKPQ), and 809–836 (EQRP…STGK). Basic and acidic residues-rich tracts occupy residues 324–339 (PENK…TKEN), 518–534 (KKTE…KAEE), and 630–640 (QRAESSIDKDC). The span at 683–700 (RTTTVQPHSHSAQPTTLR) shows a compositional bias: polar residues. The segment covering 708–725 (SSSLIASAKPAPPISSSS) has biased composition (low complexity). A compositionally biased stretch (polar residues) spans 726–738 (TGPNVTNPNQSSA). Positions 809–828 (EQRPEREAMKRQAQQERENA) are enriched in basic and acidic residues.

This is an uncharacterized protein from Mus musculus (Mouse).